We begin with the raw amino-acid sequence, 273 residues long: Putative tyrosine-protein phosphatase H16_A0669 (273 aa).

The signal sequence occupies residues 1–15 (MIKWLQRAGCLSAHA). Cys169 acts as the Phosphocysteine intermediate in catalysis.

This sequence belongs to the protein-tyrosine phosphatase family.

The enzyme catalyses O-phospho-L-tyrosyl-[protein] + H2O = L-tyrosyl-[protein] + phosphate. This Cupriavidus necator (strain ATCC 17699 / DSM 428 / KCTC 22496 / NCIMB 10442 / H16 / Stanier 337) (Ralstonia eutropha) protein is Putative tyrosine-protein phosphatase H16_A0669.